A 751-amino-acid chain; its full sequence is Meiotic sister-chromatid recombination protein 3 (751 aa).

5 disordered regions span residues 54 to 88 (GVGM…RTYS), 216 to 290 (LRAP…KKQM), 314 to 410 (PALE…EARF), 431 to 504 (TQEN…RPSF), and 558 to 610 (KDVP…SPPQ). Residues 216-228 (LRAPPRVQQQRQL) show a composition bias toward low complexity. Composition is skewed to basic and acidic residues over residues 345 to 356 (ERSRPAKREVRK) and 384 to 393 (ERVHNKEKTL). Positions 431 to 496 (TQENSTRDNG…GCETGNTTPK (66 aa)) are enriched in polar residues. A compositionally biased stretch (low complexity) spans 596-609 (RSSISSSPRRSSPP).

It is found in the cell membrane. Functionally, may be involved in the control of meiotic sister-chromatid recombination. The protein is Meiotic sister-chromatid recombination protein 3 (MSC3) of Eremothecium gossypii (strain ATCC 10895 / CBS 109.51 / FGSC 9923 / NRRL Y-1056) (Yeast).